We begin with the raw amino-acid sequence, 256 residues long: Trans-aconitate 2-methyltransferase (256 aa).

It belongs to the methyltransferase superfamily. Tam family.

It localises to the cytoplasm. The catalysed reaction is trans-aconitate + S-adenosyl-L-methionine = (E)-3-(methoxycarbonyl)pent-2-enedioate + S-adenosyl-L-homocysteine. Catalyzes the S-adenosylmethionine monomethyl esterification of trans-aconitate. The protein is Trans-aconitate 2-methyltransferase of Rhodopseudomonas palustris (strain BisB5).